We begin with the raw amino-acid sequence, 106 residues long: Follitropin subunit beta (106 aa).

6 disulfides stabilise this stretch: Cys1–Cys49, Cys15–Cys64, Cys18–Cys102, Cys26–Cys80, Cys30–Cys82, and Cys85–Cys92. N-linked (GlcNAc...) asparagine glycosylation is found at Asn5 and Asn22.

The protein belongs to the glycoprotein hormones subunit beta family. Heterodimer. The active follitropin is a heterodimer composed of an alpha chain/CGA shared with other hormones and a unique beta chain/FSHB shown here.

The protein localises to the secreted. Together with the alpha chain CGA constitutes follitropin, the follicle-stimulating hormone, and provides its biological specificity to the hormone heterodimer. Binds FSHR, a G protein-coupled receptor, on target cells to activate downstream signaling pathways. Follitropin is involved in follicle development and spermatogenesis in reproductive organs. This Struthio camelus (Common ostrich) protein is Follitropin subunit beta (FSHB).